A 366-amino-acid polypeptide reads, in one-letter code: C-X-C chemokine receptor type 3 (366 aa).

Residues 1 to 55 lie on the Extracellular side of the membrane; that stretch reads MVPEMSERQEFQASEFAYLLENSSYDYGENETYFCCTSPPCPQDFSLNFDRTFLP. N-linked (GlcNAc...) asparagine glycosylation is present at N22. Sulfotyrosine occurs at positions 25 and 27. N30 carries an N-linked (GlcNAc...) asparagine glycan. A helical membrane pass occupies residues 56-76; the sequence is VLYSLLFVLGLLGNGVVAVVL. Over 77 to 88 the chain is Cytoplasmic; that stretch reads LSQRAALSSTDT. Residues 89–109 traverse the membrane as a helical segment; sequence FLLHLAVADALLVLTLPLWAV. Residues 110-124 lie on the Extracellular side of the membrane; the sequence is DAAIQWVFGSGLCKV. An intrachain disulfide couples C122 to C201. The chain crosses the membrane as a helical span at residues 125–145; the sequence is AGALFNINFYAGALLLACISF. Residues 146 to 167 lie on the Cytoplasmic side of the membrane; the sequence is DRYLSIVHATQFYRRGPPARVA. Residues 168 to 188 traverse the membrane as a helical segment; that stretch reads LTCVAVWGLCLLFALPDFIFL. The Extracellular portion of the chain corresponds to 189–221; sequence SSHHDNRLNATHCQYNFPQEGRTALRVLQLVAG. N-linked (GlcNAc...) asparagine glycosylation occurs at N197. The chain crosses the membrane as a helical span at residues 222–242; the sequence is FLLPLLVMAYCYARILTVLLV. The Cytoplasmic segment spans residues 243-254; it reads SRGQRRLRAMRL. A helical membrane pass occupies residues 255 to 275; the sequence is VVVVVVAFALCWTPYHLVVLV. Residues 276 to 299 lie on the Extracellular side of the membrane; it reads DTLMDLGALARNCGRESRVDVAKS. A helical membrane pass occupies residues 300-320; the sequence is VTSGMGYMHCCLNPLLYAFVG. Topologically, residues 321-366 are cytoplasmic; the sequence is VKFRERMWVLLMRLGCPDQRGHQRQPSASRRDSSWSETTEASYSGL. Positions 339–366 are disordered; the sequence is QRGHQRQPSASRRDSSWSETTEASYSGL. Residues 355 to 366 are compositionally biased toward polar residues; that stretch reads WSETTEASYSGL.

Belongs to the G-protein coupled receptor 1 family. In terms of assembly, homomer. Forms heteromers with ACKR4. Interacts with PF4/CXCL4. Post-translationally, sulfation on Tyr-25 and Tyr-27 is essential for CXCL10 binding. N-glycosylated.

The protein resides in the cell membrane. Functionally, receptor for the C-X-C chemokine CXCL9, CXCL10 and CXCL11 and mediates the proliferation, survival and angiogenic activity of mesangial cells through a heterotrimeric G-protein signaling pathway. Probably promotes cell chemotaxis response. Binds to CCL21. Upon activation by PF4, induces activated T-lymphocytes migration mediated via downstream Ras/extracellular signal-regulated kinase (ERK) signaling. This chain is C-X-C chemokine receptor type 3 (CXCR3), found in Capra hircus (Goat).